Here is a 186-residue protein sequence, read N- to C-terminus: Thiol:disulfide interchange protein CycY (186 aa).

Positions 1 to 20 (MGRYTLALLPLIVFGGIAHG) are cleaved as a signal peptide. A Thioredoxin domain is found at 47-182 (DAEPAAARRA…LVPAMEKALG (136 aa)). Cys80 and Cys83 are oxidised to a cystine.

It belongs to the thioredoxin family. DsbE subfamily.

The protein localises to the periplasm. Functionally, required for disulfide bond formation in some periplasmic proteins. Also acts as a disulfide oxidoreductase in cytochromes c biogenesis. The cysteines of apocytochromes c must be in the reduced state for covalent linkage between the two moieties to occur. The protein is Thiol:disulfide interchange protein CycY (cycY) of Rhizobium leguminosarum bv. viciae.